We begin with the raw amino-acid sequence, 115 residues long: MTARYLGMNRSDGLTVTDLEHISQSIGDILRTPVGSRVMRRDYGSLLASMIDQPQTPALELQIKVACYMAVLKWEPRVTLSSVTTARSFDGRMTVTLTGQHNDTGQPLSLTIPVS.

This sequence belongs to the GpW/Gp25 family.

The protein localises to the virion. Functionally, baseplate protein that is part of the outer wedges of the baseplate. Probably plays a role as a connector between the central and peripheral parts of the baseplate. Plays a role in tail assembly. The sequence is that of Baseplate protein W (W) from Escherichia phage P2 (Bacteriophage P2).